We begin with the raw amino-acid sequence, 312 residues long: Putative HTH-type transcriptional regulatory protein Ta1363 (312 aa).

The HTH cro/C1-type domain maps to 133 to 186 (LREMRMKMSLSIGYLSHYLGVSRRSVSLYENGSSATIDVFLKLQEIIKSDLVDH). Positions 144-163 (IGYLSHYLGVSRRSVSLYEN) form a DNA-binding region, H-T-H motif.

The sequence is that of Putative HTH-type transcriptional regulatory protein Ta1363 from Thermoplasma acidophilum (strain ATCC 25905 / DSM 1728 / JCM 9062 / NBRC 15155 / AMRC-C165).